Here is a 652-residue protein sequence, read N- to C-terminus: Spermatogenesis-associated protein 13 (652 aa).

The interval 1 to 24 (MTSASPEDQNAPVGCPKGARRRRP) is disordered. Ser78 carries the phosphoserine modification. The segment at 81 to 108 (IGLDRVGRRRQMRASNVSSDGGTEPSAL) is disordered. The interval 98–150 (SSDGGTEPSALVDDNGSEEDFSYEDLCQASPRYLQPGGEQLAINELISDGNVV) is ABR (APC-binding region) domain. The residue at position 114 (Ser114) is a Phosphoserine. Residues 147–206 (GNVVCAEALWDHVTMDDQELGFKAGDVIQVLEASNKDWWWGRSEDKEAWFPASFVRLRVN) enclose the SH3 domain. The segment at 209–235 (ELSENSSSTPSEEQDEEASQSRHRHCE) is disordered. Residues 240–424 (MRTNVIREIM…KNVACLINER (185 aa)) enclose the DH domain. Positions 455-561 (ELIHSGELTK…WLQACADERR (107 aa)) constitute a PH domain. Residues 561-652 (RRVQEDKEMG…TFNRLTPFRK (92 aa)) are C-terminal tail.

Interacts (via ABR and SH3 domain) with APC. The binding of APC enhances its GEF activity by relieving it from an autoinhibitory conformation, in which the ABR and SH3 domains are associated with the C-terminal tail. Interacts (via C-terminal tail) with PPP1R9B (via C-terminus). Interacts with RAC1. In terms of tissue distribution, expressed at high levels in the placenta, spleen and kidney, at moderate levels in lung, small intestine, liver, brain and heart, and at low levels in skeletal muscle. Expression is aberrantly enhanced in most colorectal tumors.

The protein resides in the cytoplasm. It is found in the cell projection. The protein localises to the filopodium. Its subcellular location is the lamellipodium. It localises to the ruffle membrane. The protein resides in the podosome. Both the ABR and the SH3 domains contribute to maintaining the protein in an inhibited conformation by associating with the C-terminal tail. Binding of these domains to the C-terminal tail inhibits the activity of the protein by blocking a region that is required for its GEF activity. Acts as a guanine nucleotide exchange factor (GEF) for RHOA, RAC1 and CDC42 GTPases. Regulates cell migration and adhesion assembly and disassembly through a RAC1, PI3K, RHOA and AKT1-dependent mechanism. Increases both RAC1 and CDC42 activity, but decreases the amount of active RHOA. Required for MMP9 up-regulation via the JNK signaling pathway in colorectal tumor cells. Involved in tumor angiogenesis and may play a role in intestinal adenoma formation and tumor progression. The polypeptide is Spermatogenesis-associated protein 13 (Homo sapiens (Human)).